A 134-amino-acid chain; its full sequence is Retinoid-binding protein 7 (134 aa).

The protein belongs to the calycin superfamily. Fatty-acid binding protein (FABP) family. In terms of tissue distribution, highly expressed in white adipose tissue and mammary gland.

Its subcellular location is the cytoplasm. Functionally, intracellular transport of retinol. The chain is Retinoid-binding protein 7 (Rbp7) from Mus musculus (Mouse).